We begin with the raw amino-acid sequence, 681 residues long: U3 small nucleolar ribonucleoprotein protein MPP10 (681 aa).

Residues serine 61, serine 120, and serine 139 each carry the phosphoserine modification. A compositionally biased stretch (acidic residues) spans 105–147 (SLLPESEEQEREEDGSEIEADDKEDLEDLEEEEVSDMGNDDPE). 2 disordered regions span residues 105–202 (SLLP…IVDD) and 216–364 (NIEK…EKRQ). Residues 109-138 (ESEEQEREEDGSEIEADDKEDLEDLEEEEV) adopt a coiled-coil conformation. The segment covering 148–162 (MGERAENSSKSDLRK) has biased composition (basic and acidic residues). Residues serine 163, serine 167, and serine 171 each carry the phosphoserine modification. Residues 180 to 190 (LEQQSKVQNKG) are compositionally biased toward polar residues. Composition is skewed to basic and acidic residues over residues 193–202 (KPREKSIVDD) and 216–226 (NIEKEEERKDD). A coiled-coil region spans residues 205-239 (FKLSEMEAYLENIEKEEERKDDNDEEEEDIDFFED). Acidic residues predominate over residues 227–247 (NDEEEEDIDFFEDIDSDEDEG). A Phosphoserine modification is found at serine 242. Residues 253–264 (KKLKSGKSSRNL) are compositionally biased toward basic residues. Phosphoserine is present on residues serine 275 and serine 289. A compositionally biased stretch (basic and acidic residues) spans 280-290 (TNVHDDELDSN). 2 coiled-coil regions span residues 284–324 (DDEL…NKQH) and 348–382 (NVKK…LEKK). The segment covering 291–318 (KEDDEIAEEEAEELSISETDEDDDLQEN) has biased composition (acidic residues). Residues 319–329 (EDNKQHKESLK) are compositionally biased toward basic and acidic residues. Lysine 350 is covalently cross-linked (Glycyl lysine isopeptide (Lys-Gly) (interchain with G-Cter in SUMO2)). Residues 351–364 (KNSDEVKSSFEKRQ) show a composition bias toward basic and acidic residues. Glycyl lysine isopeptide (Lys-Gly) (interchain with G-Cter in SUMO2) cross-links involve residues lysine 382 and lysine 394. A coiled-coil region spans residues 469–490 (LAEIYEQEYIKLNQQKTAEEEN). Lysine 555 participates in a covalent cross-link: Glycyl lysine isopeptide (Lys-Gly) (interchain with G-Cter in SUMO2). Over residues 558 to 575 (NKAGDIKTAAEKTATDKK) the composition is skewed to basic and acidic residues. The disordered stretch occupies residues 558 to 606 (NKAGDIKTAAEKTATDKKRERRKKKYQKRMKIKEKEKRRKLLEKSSVDQ). Residues 574-604 (KKRERRKKKYQKRMKIKEKEKRRKLLEKSSV) adopt a coiled-coil conformation. Residues 576–598 (RERRKKKYQKRMKIKEKEKRRKL) show a composition bias toward basic residues. Residue lysine 609 is modified to N6-acetyllysine. Residues lysine 632 and lysine 649 each participate in a glycyl lysine isopeptide (Lys-Gly) (interchain with G-Cter in SUMO2) cross-link. Positions 648–670 (SKLQDQVKMQINDAKKTEKKKKK) form a coiled coil. The segment at 660–681 (DAKKTEKKKKKRQDISVHKLKL) is disordered. The segment covering 672–681 (QDISVHKLKL) has biased composition (basic and acidic residues).

It belongs to the MPP10 family. In terms of assembly, part of the small subunit (SSU) processome, composed of more than 70 proteins and the RNA chaperone small nucleolar RNA (snoRNA) U3. Component of a heterotrimeric complex containing IMP3, IMP4 and MPHOSPH10. Interacts with IMP3 and IMP4. Post-translationally, phosphorylated in M (mitotic) phase.

Its subcellular location is the nucleus. It localises to the nucleolus. The protein localises to the chromosome. Its function is as follows. Component of the 60-80S U3 small nucleolar ribonucleoprotein (U3 snoRNP). Required for the early cleavages during pre-18S ribosomal RNA processing. Part of the small subunit (SSU) processome, first precursor of the small eukaryotic ribosomal subunit. During the assembly of the SSU processome in the nucleolus, many ribosome biogenesis factors, an RNA chaperone and ribosomal proteins associate with the nascent pre-rRNA and work in concert to generate RNA folding, modifications, rearrangements and cleavage as well as targeted degradation of pre-ribosomal RNA by the RNA exosome. The protein is U3 small nucleolar ribonucleoprotein protein MPP10 of Homo sapiens (Human).